Reading from the N-terminus, the 887-residue chain is 3-hydroxy-3-methylglutaryl-coenzyme A reductase (887 aa).

Residues 1-9 (MLSRLFRMH) are Cytoplasmic-facing. Residues 10–39 (GLFVASHPWEVIVGTVTLTICMMSMNMFTG) traverse the membrane as a helical segment. Over 40 to 56 (NNKICGWNYECPKFEED) the chain is Lumenal. The helical transmembrane segment at 57 to 78 (VLSSDIIILTITRCIAILYIYF) threads the bilayer. In terms of domain architecture, SSD spans 61–218 (DIIILTITRC…MTFFPACVSL (158 aa)). The short motif at 75-78 (YIYF) is the INSIG-binding motif element. Over 79 to 89 (QFQNLRQLGSK) the chain is Cytoplasmic. Lysine 89 is covalently cross-linked (Glycyl lysine isopeptide (Lys-Gly) (interchain with G-Cter in ubiquitin)). The helical transmembrane segment at 90 to 114 (YILGIAGLFTIFSSFVFSTVVIHFL) threads the bilayer. The Lumenal portion of the chain corresponds to 115–123 (DKELTGLNE). A helical membrane pass occupies residues 124-149 (ALPFFLLLIDLSRASALAKFALSSNS). Topologically, residues 150-159 (QDEVRENIAR) are cytoplasmic. Residues 160–187 (GMAILGPTFTLDALVECLVIGVGTMSGV) traverse the membrane as a helical segment. The Lumenal segment spans residues 188 to 191 (RQLE). Residues 192–220 (IMCCFGCMSVLANYFVFMTFFPACVSLVL) traverse the membrane as a helical segment. Over 221 to 248 (ELSRESREGRPIWQLSHFARVLEEEENK) the chain is Cytoplasmic. Lysine 248 participates in a covalent cross-link: Glycyl lysine isopeptide (Lys-Gly) (interchain with G-Cter in ubiquitin). The helical transmembrane segment at 249–275 (PNPVTQRVKMIMSLGLVLVHAHSRWIA) threads the bilayer. At 276–314 (DPSPQNSTAEQSKVSLGLAEDVSKRIEPSVSLWQFYLSK) the chain is on the lumenal side. Asparagine 281 is a glycosylation site (N-linked (GlcNAc...) asparagine). A helical membrane pass occupies residues 315 to 339 (MISMDIEQVITLSLALLLAVKYIFF). The Cytoplasmic segment spans residues 340 to 887 (EQAETESTLS…LQGTCTKKAA (548 aa)). Active-site charge relay system residues include glutamate 558, lysine 690, and aspartate 766. Histidine 865 acts as the Proton donor in catalysis. Serine 871 carries the phosphoserine; by AMPK modification.

Belongs to the HMG-CoA reductase family. In terms of assembly, homotetramer. Homodimer. Interacts (via its SSD) with INSIG1; the interaction, accelerated by sterols, leads to the recruitment of HMGCR to AMFR/gp78 for its ubiquitination by the sterol-mediated ERAD pathway. Interacts with UBIAD1. Undergoes sterol-mediated ubiquitination and ER-associated degradation (ERAD). Accumulation of sterols in the endoplasmic reticulum (ER) membrane, triggers binding of the reductase to the ER membrane protein INSIG1 or INSIG2. The INSIG1 binding leads to the recruitment of the ubiquitin ligase, AMFR/gp78, RNF139 or RNF145, initiating ubiquitination of the reductase. The ubiquitinated reductase is then extracted from the ER membrane and delivered to cytosolic 26S proteosomes by a mechanism probably mediated by the ATPase Valosin-containing protein VCP/p97. The INSIG2-binding leads to the recruitment of the ubiquitin ligase RNF139, initiating ubiquitination of the reductase. Lys-248 is the main site of ubiquitination. Ubiquitination is enhanced by the presence of a geranylgeranylated protein. In terms of processing, N-glycosylated. Deglycosylated by NGLY1 on release from the endoplasmic reticulum (ER) in a sterol-mediated manner. Post-translationally, phosphorylated. Phosphorylation at Ser-871 reduces the catalytic activity.

It localises to the endoplasmic reticulum membrane. The protein resides in the peroxisome membrane. The catalysed reaction is (R)-mevalonate + 2 NADP(+) + CoA = (3S)-3-hydroxy-3-methylglutaryl-CoA + 2 NADPH + 2 H(+). The protein operates within metabolic intermediate biosynthesis; (R)-mevalonate biosynthesis; (R)-mevalonate from acetyl-CoA: step 3/3. Regulated by a negative feedback mechanism through sterols and non-sterol metabolites derived from mevalonate. Phosphorylation at Ser-871 down-regulates the catalytic activity. In terms of biological role, catalyzes the conversion of (3S)-hydroxy-3-methylglutaryl-CoA (HMG-CoA) to mevalonic acid, the rate-limiting step in the synthesis of cholesterol and other isoprenoids, thus plays a critical role in cellular cholesterol homeostasis. This is 3-hydroxy-3-methylglutaryl-coenzyme A reductase (Hmgcr) from Rattus norvegicus (Rat).